The primary structure comprises 272 residues: Orotidine 5'-phosphate decarboxylase (272 aa).

Lys-95 (proton donor) is an active-site residue.

Belongs to the OMP decarboxylase family. Type 2 subfamily.

The enzyme catalyses orotidine 5'-phosphate + H(+) = UMP + CO2. It participates in pyrimidine metabolism; UMP biosynthesis via de novo pathway; UMP from orotate: step 2/2. The polypeptide is Orotidine 5'-phosphate decarboxylase (Bordetella avium (strain 197N)).